Here is a 356-residue protein sequence, read N- to C-terminus: Methylthioribose-1-phosphate isomerase (356 aa).

The active-site Proton donor is the aspartate 234.

This sequence belongs to the eIF-2B alpha/beta/delta subunits family. MtnA subfamily.

It localises to the cytoplasm. Its subcellular location is the nucleus. The catalysed reaction is 5-(methylsulfanyl)-alpha-D-ribose 1-phosphate = 5-(methylsulfanyl)-D-ribulose 1-phosphate. Its pathway is amino-acid biosynthesis; L-methionine biosynthesis via salvage pathway; L-methionine from S-methyl-5-thio-alpha-D-ribose 1-phosphate: step 1/6. Its function is as follows. Catalyzes the interconversion of methylthioribose-1-phosphate (MTR-1-P) into methylthioribulose-1-phosphate (MTRu-1-P). The protein is Methylthioribose-1-phosphate isomerase (mri1) of Schizosaccharomyces japonicus (strain yFS275 / FY16936) (Fission yeast).